Reading from the N-terminus, the 338-residue chain is MYG1 protein YER156C (338 aa).

This sequence belongs to the MYG1 family.

This chain is MYG1 protein YER156C, found in Saccharomyces cerevisiae (strain ATCC 204508 / S288c) (Baker's yeast).